The sequence spans 74 residues: Brevinin-2Tb (74 aa).

The first 22 residues, 1–22 (MFTMKKSLLLFFFLGTISLSLC), serve as a signal peptide directing secretion. A propeptide spanning residues 23 to 40 (QEERNADEDDGEMTEEEK) is cleaved from the precursor. Cys68 and Cys74 are disulfide-bonded.

This sequence belongs to the frog skin active peptide (FSAP) family. Brevinin subfamily. In terms of tissue distribution, expressed by the skin glands.

It localises to the secreted. Its function is as follows. Antimicrobial peptide. This Rana temporaria (European common frog) protein is Brevinin-2Tb.